A 319-amino-acid polypeptide reads, in one-letter code: Lipoyl synthase (319 aa).

The interval 1-28 is disordered; that stretch reads MVVLVDTVSSTPVRPRHPEKAARPDALS. The segment covering 16 to 28 has biased composition (basic and acidic residues); sequence RHPEKAARPDALS. The [4Fe-4S] cluster site is built by C61, C66, C72, C87, C91, C94, and S300. Positions 73 to 289 constitute a Radical SAM core domain; it reads WDKKHATFMI…AKTAYAKGFL (217 aa).

Belongs to the radical SAM superfamily. Lipoyl synthase family. Requires [4Fe-4S] cluster as cofactor.

The protein resides in the cytoplasm. The catalysed reaction is [[Fe-S] cluster scaffold protein carrying a second [4Fe-4S](2+) cluster] + N(6)-octanoyl-L-lysyl-[protein] + 2 oxidized [2Fe-2S]-[ferredoxin] + 2 S-adenosyl-L-methionine + 4 H(+) = [[Fe-S] cluster scaffold protein] + N(6)-[(R)-dihydrolipoyl]-L-lysyl-[protein] + 4 Fe(3+) + 2 hydrogen sulfide + 2 5'-deoxyadenosine + 2 L-methionine + 2 reduced [2Fe-2S]-[ferredoxin]. The protein operates within protein modification; protein lipoylation via endogenous pathway; protein N(6)-(lipoyl)lysine from octanoyl-[acyl-carrier-protein]: step 2/2. Functionally, catalyzes the radical-mediated insertion of two sulfur atoms into the C-6 and C-8 positions of the octanoyl moiety bound to the lipoyl domains of lipoate-dependent enzymes, thereby converting the octanoylated domains into lipoylated derivatives. In Rhodopseudomonas palustris (strain HaA2), this protein is Lipoyl synthase.